We begin with the raw amino-acid sequence, 89 residues long: Small ribosomal subunit protein uS15 (89 aa).

This sequence belongs to the universal ribosomal protein uS15 family. In terms of assembly, part of the 30S ribosomal subunit. Forms a bridge to the 50S subunit in the 70S ribosome, contacting the 23S rRNA.

Functionally, one of the primary rRNA binding proteins, it binds directly to 16S rRNA where it helps nucleate assembly of the platform of the 30S subunit by binding and bridging several RNA helices of the 16S rRNA. In terms of biological role, forms an intersubunit bridge (bridge B4) with the 23S rRNA of the 50S subunit in the ribosome. This is Small ribosomal subunit protein uS15 from Azobacteroides pseudotrichonymphae genomovar. CFP2.